The following is a 450-amino-acid chain: Homogentisate 1,2-dioxygenase (450 aa).

Catalysis depends on His304, which acts as the Proton acceptor. Positions 347 and 353 each coordinate Fe cation. Tyr362 and His383 together coordinate homogentisate. His383 is a Fe cation binding site.

This sequence belongs to the homogentisate dioxygenase family. As to quaternary structure, hexamer; dimer of trimers. Fe cation is required as a cofactor.

It carries out the reaction homogentisate + O2 = 4-maleylacetoacetate + H(+). The protein operates within amino-acid degradation; L-phenylalanine degradation; acetoacetate and fumarate from L-phenylalanine: step 4/6. Functionally, involved in the catabolism of homogentisate (2,5-dihydroxyphenylacetate or 2,5-OH-PhAc), a central intermediate in the degradation of phenylalanine and tyrosine. Catalyzes the oxidative ring cleavage of the aromatic ring of homogentisate to yield maleylacetoacetate. The protein is Homogentisate 1,2-dioxygenase of Burkholderia thailandensis (strain ATCC 700388 / DSM 13276 / CCUG 48851 / CIP 106301 / E264).